The sequence spans 397 residues: Argininosuccinate synthase (397 aa).

7–15 (LYSGGLDTS) provides a ligand contact to ATP. Y83 lines the L-citrulline pocket. G113 lines the ATP pocket. T115, N119, and D120 together coordinate L-aspartate. N119 is an L-citrulline binding site. Positions 123, 169, 178, 253, and 265 each coordinate L-citrulline.

This sequence belongs to the argininosuccinate synthase family. Type 1 subfamily. In terms of assembly, homotetramer.

It localises to the cytoplasm. It carries out the reaction L-citrulline + L-aspartate + ATP = 2-(N(omega)-L-arginino)succinate + AMP + diphosphate + H(+). It functions in the pathway amino-acid biosynthesis; L-arginine biosynthesis; L-arginine from L-ornithine and carbamoyl phosphate: step 2/3. The sequence is that of Argininosuccinate synthase from Thermoplasma volcanium (strain ATCC 51530 / DSM 4299 / JCM 9571 / NBRC 15438 / GSS1).